The primary structure comprises 359 residues: Medium-wave-sensitive opsin 1 (359 aa).

Over 1 to 47 the chain is Extracellular; it reads MAQRLTGEQTLDHYEDSTHASIFTYTNSNSTKGPFEGPNYHIAPRWV. The required for 11-cis-retinal regeneration stretch occupies residues 12 to 38; sequence DHYEDSTHASIFTYTNSNSTKGPFEGP. Asn-29 carries N-linked (GlcNAc...) asparagine glycosylation. A helical transmembrane segment spans residues 48–72; it reads YHLTSTWMILVVVASVFTNGLVLAA. Over 73-84 the chain is Cytoplasmic; it reads TMRFKKLRHPLN. Residues 85–110 traverse the membrane as a helical segment; the sequence is WILVNLAVADLAETIIASTISVVNQI. The Extracellular portion of the chain corresponds to 111–124; that stretch reads YGYFVLGHPLCVIE. Residues Cys-121 and Cys-198 are joined by a disulfide bond. The helical transmembrane segment at 125 to 144 threads the bilayer; the sequence is GYIVSLCGITGLWSLAIISW. The Cytoplasmic segment spans residues 145–163; sequence ERWLVVCKPFGNVRFDAKL. The chain crosses the membrane as a helical span at residues 164–187; that stretch reads ATVGIVFSWVWAAIWTAPPIFGWS. Residues 188–213 are Extracellular-facing; sequence RYWPYGLKTSCGPDVFSGTSYPGVQS. Residues 214 to 241 form a helical membrane-spanning segment; sequence YMMVLMVTCCIFPLSIIVLCYLQVWLAI. Over 242–263 the chain is Cytoplasmic; sequence RAVAKQQKESESTQKAEKEVTR. Residues 264–287 traverse the membrane as a helical segment; the sequence is MVVVMVFAYCLCWGPYTFFACFAT. Over 288-295 the chain is Extracellular; that stretch reads AHPGYAFH. A helical transmembrane segment spans residues 296–320; that stretch reads PLVASLPSYFAKSATIYNPIIYVFM. Lys-307 is subject to N6-(retinylidene)lysine. Residues 321 to 359 are Cytoplasmic-facing; sequence NRQFRNCILHLFGKKVDDSSELSSTSKTEVSSVSSVSPA.

Belongs to the G-protein coupled receptor 1 family. Opsin subfamily. In terms of assembly, monomer. Homodimer. Homotetramer. In terms of processing, N-glycosylated. O-glycosylated. Post-translationally, phosphorylated on some or all of the serine and threonine residues present in the C-terminal region. Expressed in retina (at protein level). Expressed in cone photoreceptor cells (at protein level).

Its subcellular location is the cell membrane. Visual pigments are the light-absorbing molecules that mediate vision. They consist of an apoprotein, opsin, covalently linked to cis-retinal. May increase spectral sensitivity in dim light. The chain is Medium-wave-sensitive opsin 1 (Opn1mw) from Mus musculus (Mouse).